The sequence spans 350 residues: Thymidine kinase (350 aa).

Residue 17-24 (GPFGIGKT) coordinates ATP. Catalysis depends on glutamate 45, which acts as the Proton acceptor. Glutamine 86 serves as a coordination point for substrate. Residue arginine 176 participates in ATP binding. Residue arginine 182 coordinates substrate.

It belongs to the herpesviridae thymidine kinase family. Homodimer.

The catalysed reaction is thymidine + ATP = dTMP + ADP + H(+). In terms of biological role, catalyzes the transfer of the gamma-phospho group of ATP to thymidine to generate dTMP in the salvage pathway of pyrimidine synthesis. The dTMP serves as a substrate for DNA polymerase during viral DNA replication. Allows the virus to be reactivated and to grow in non-proliferative cells lacking a high concentration of phosphorylated nucleic acid precursors. This Gallus gallus (Chicken) protein is Thymidine kinase.